We begin with the raw amino-acid sequence, 295 residues long: Nucleotide-binding protein YjiE (295 aa).

12-19 (GMSGAGKT) contacts ATP. 63–66 (DMRS) provides a ligand contact to GTP.

This sequence belongs to the RapZ-like family.

Its function is as follows. Displays ATPase and GTPase activities. The chain is Nucleotide-binding protein YjiE (yjiE) from Lactococcus lactis subsp. lactis (strain IL1403) (Streptococcus lactis).